Reading from the N-terminus, the 620-residue chain is Glutathione-regulated potassium-efflux system protein KefC (620 aa).

12 helical membrane-spanning segments follow: residues 4–24 (HTLI…PIAV), 26–46 (LGLG…PWGL), 54–74 (SILH…GLEL), 90–110 (GALQ…LLGL), 114–134 (VAEL…MQAM), 149–169 (FAVL…IPLL), 178–198 (MGAF…VVLL), 218–238 (VFSA…EEVG), 270–290 (GLLL…GTLI), 294–314 (LRIV…LWLI), 327–347 (WFAV…GAAQ), and 359–379 (SLTL…VILN). The RCK N-terminal domain occupies 399–518 (QPRVIIAGFG…AGVEKPERET (120 aa)). The disordered stretch occupies residues 597–620 (GWQGTEEGKHTGNMADEPETKPSS).

It belongs to the monovalent cation:proton antiporter 2 (CPA2) transporter (TC 2.A.37) family. KefC subfamily. In terms of assembly, homodimer. Interacts with the regulatory subunit KefF.

The protein resides in the cell inner membrane. In terms of biological role, pore-forming subunit of a potassium efflux system that confers protection against electrophiles. Catalyzes K(+)/H(+) antiport. The sequence is that of Glutathione-regulated potassium-efflux system protein KefC from Escherichia coli O45:K1 (strain S88 / ExPEC).